We begin with the raw amino-acid sequence, 241 residues long: Biosynthetic peptidoglycan transglycosylase (241 aa).

The helical transmembrane segment at 18–38 threads the bilayer; that stretch reads GVIGIIALWMAGILIFAFLPV.

Belongs to the glycosyltransferase 51 family.

The protein localises to the cell inner membrane. It catalyses the reaction [GlcNAc-(1-&gt;4)-Mur2Ac(oyl-L-Ala-gamma-D-Glu-L-Lys-D-Ala-D-Ala)](n)-di-trans,octa-cis-undecaprenyl diphosphate + beta-D-GlcNAc-(1-&gt;4)-Mur2Ac(oyl-L-Ala-gamma-D-Glu-L-Lys-D-Ala-D-Ala)-di-trans,octa-cis-undecaprenyl diphosphate = [GlcNAc-(1-&gt;4)-Mur2Ac(oyl-L-Ala-gamma-D-Glu-L-Lys-D-Ala-D-Ala)](n+1)-di-trans,octa-cis-undecaprenyl diphosphate + di-trans,octa-cis-undecaprenyl diphosphate + H(+). The protein operates within cell wall biogenesis; peptidoglycan biosynthesis. In terms of biological role, peptidoglycan polymerase that catalyzes glycan chain elongation from lipid-linked precursors. This is Biosynthetic peptidoglycan transglycosylase from Yersinia pestis bv. Antiqua (strain Antiqua).